Reading from the N-terminus, the 501-residue chain is uncharacterized protein (501 aa).

2 disordered regions span residues 179–404 (EKTS…DETA) and 480–501 (SDDTDDTDDTNNSCSSEVDDSD). Basic and acidic residues predominate over residues 191-200 (SRNESQDKSR). The segment covering 201-214 (DKSRKKVCNTHKNK) has biased composition (basic residues). Over residues 215 to 226 (KTLDNVKPDKNI) the composition is skewed to basic and acidic residues. Over residues 231-274 (SSNKFTTNKPKSNKNSSDSDGSTKTTKSTRSTKSTKSSKSQKST) the composition is skewed to low complexity. Residues 304 to 316 (NPKESINHKKNDS) are compositionally biased toward basic and acidic residues. The segment covering 333–352 (DSTNCRKSNRTTTRDVTNSD) has biased composition (polar residues). Residues 379-403 (EQSDLTEDETEENVSEEDETEEDET) show a composition bias toward acidic residues.

This is an uncharacterized protein from Acanthamoeba polyphaga mimivirus (APMV).